The following is a 389-amino-acid chain: PqqA peptide cyclase (389 aa).

The region spanning 19–234 is the Radical SAM core domain; the sequence is VGLPLWLLAE…TNEYRDQLAA (216 aa). Residues Cys33, Cys37, and Cys40 each coordinate [4Fe-4S] cluster.

The protein belongs to the radical SAM superfamily. PqqE family. In terms of assembly, interacts with PqqD. The interaction is necessary for activity of PqqE. The cofactor is [4Fe-4S] cluster.

The enzyme catalyses [PQQ precursor protein] + S-adenosyl-L-methionine = E-Y cross-linked-[PQQ precursor protein] + 5'-deoxyadenosine + L-methionine + H(+). It functions in the pathway cofactor biosynthesis; pyrroloquinoline quinone biosynthesis. In terms of biological role, catalyzes the cross-linking of a glutamate residue and a tyrosine residue in the PqqA protein as part of the biosynthesis of pyrroloquinoline quinone (PQQ). The polypeptide is PqqA peptide cyclase (Pseudomonas syringae pv. tomato (strain ATCC BAA-871 / DC3000)).